The chain runs to 102 residues: uncharacterized protein (102 aa).

Functionally, essential for virus function. This is an uncharacterized protein from Saccharolobus solfataricus (Sulfolobus solfataricus).